A 381-amino-acid polypeptide reads, in one-letter code: Protein-glutamate methylesterase/protein-glutamine glutaminase (381 aa).

Positions arginine 20–histidine 138 constitute a Response regulatory domain. 4-aspartylphosphate is present on aspartate 71. Positions proline 154 to histidine 176 are disordered. Residues proline 183–valine 373 enclose the CheB-type methylesterase domain. Catalysis depends on residues serine 197, histidine 225, and aspartate 321.

This sequence belongs to the CheB family. In terms of processing, phosphorylated by CheA. Phosphorylation of the N-terminal regulatory domain activates the methylesterase activity.

The protein localises to the cytoplasm. It carries out the reaction [protein]-L-glutamate 5-O-methyl ester + H2O = L-glutamyl-[protein] + methanol + H(+). It catalyses the reaction L-glutaminyl-[protein] + H2O = L-glutamyl-[protein] + NH4(+). Functionally, involved in chemotaxis. Part of a chemotaxis signal transduction system that modulates chemotaxis in response to various stimuli. Catalyzes the demethylation of specific methylglutamate residues introduced into the chemoreceptors (methyl-accepting chemotaxis proteins or MCP) by CheR. Also mediates the irreversible deamidation of specific glutamine residues to glutamic acid. This is Protein-glutamate methylesterase/protein-glutamine glutaminase from Nitrobacter hamburgensis (strain DSM 10229 / NCIMB 13809 / X14).